A 128-amino-acid chain; its full sequence is Small ribosomal subunit protein bS6 (128 aa).

Belongs to the bacterial ribosomal protein bS6 family.

Binds together with bS18 to 16S ribosomal RNA. This chain is Small ribosomal subunit protein bS6, found in Nitratiruptor sp. (strain SB155-2).